The following is a 239-amino-acid chain: Ribonuclease P protein component 3 (239 aa).

Belongs to the eukaryotic/archaeal RNase P protein component 3 family. In terms of assembly, consists of a catalytic RNA component and at least 4-5 protein subunits.

The protein localises to the cytoplasm. The catalysed reaction is Endonucleolytic cleavage of RNA, removing 5'-extranucleotides from tRNA precursor.. Part of ribonuclease P, a protein complex that generates mature tRNA molecules by cleaving their 5'-ends. In Methanosarcina acetivorans (strain ATCC 35395 / DSM 2834 / JCM 12185 / C2A), this protein is Ribonuclease P protein component 3.